Consider the following 605-residue polypeptide: Meiosis-specific protein HOP1 (605 aa).

An HORMA domain is found at 20–250; sequence EQSQKLLQTM…TKHHKVALSV (231 aa). Residues 348–364 fold into a zinc finger; it reads CKSCRKTLHGICYGNFL.

It localises to the nucleus. It is found in the chromosome. Probable constituent of the synaptonemal complex during meiosis. May interact with RED1. The sequence is that of Meiosis-specific protein HOP1 (HOP1) from Saccharomyces cerevisiae (strain ATCC 204508 / S288c) (Baker's yeast).